We begin with the raw amino-acid sequence, 351 residues long: Photosystem II D2 protein (351 aa).

Residues 39–59 (TAYLAIGGWLTGTTFVTSWYT) form a helical membrane-spanning segment. Residue His116 coordinates chlorophyll a. Residues 123–139 (GFMLRQFEISRLVGIRP) traverse the membrane as a helical segment. Pheophytin a-binding residues include Gln128 and Asn141. A helical membrane pass occupies residues 151 to 164 (VFVSVFLIYPLGQS). His196 is a chlorophyll a binding site. A helical membrane pass occupies residues 206 to 226 (GALLSAIHGVTVENTLYEDGE). The a plastoquinone site is built by His213 and Phe260. A Fe cation-binding site is contributed by His213. His267 contacts Fe cation. Residues 277 to 293 (GLWTSSIGIIGLALNLR) form a helical membrane-spanning segment.

The protein belongs to the reaction center PufL/M/PsbA/D family. As to quaternary structure, PSII is composed of 1 copy each of membrane proteins PsbA, PsbB, PsbC, PsbD, PsbE, PsbF, PsbH, PsbI, PsbJ, PsbK, PsbL, PsbM, PsbT, PsbX, PsbY, PsbZ, Psb30/Ycf12, peripheral proteins PsbO, CyanoQ (PsbQ), PsbU, PsbV and a large number of cofactors. It forms dimeric complexes. Requires The D1/D2 heterodimer binds P680, chlorophylls that are the primary electron donor of PSII, and subsequent electron acceptors. It shares a non-heme iron and each subunit binds pheophytin, quinone, additional chlorophylls, carotenoids and lipids. There is also a Cl(-1) ion associated with D1 and D2, which is required for oxygen evolution. The PSII complex binds additional chlorophylls, carotenoids and specific lipids. as cofactor.

It localises to the host cellular thylakoid membrane. It carries out the reaction 2 a plastoquinone + 4 hnu + 2 H2O = 2 a plastoquinol + O2. Functionally, photosystem II (PSII) is a light-driven water:plastoquinone oxidoreductase that uses light energy to abstract electrons from H(2)O, generating O(2) and a proton gradient subsequently used for ATP formation. It consists of a core antenna complex that captures photons, and an electron transfer chain that converts photonic excitation into a charge separation. The D1/D2 (PsbA/PsbD) reaction center heterodimer binds P680, the primary electron donor of PSII as well as several subsequent electron acceptors. D2 is needed for assembly of a stable PSII complex. This Synechococcus protein is Photosystem II D2 protein (psbD).